Here is a 273-residue protein sequence, read N- to C-terminus: Flagellin FljN (273 aa).

The protein belongs to the bacterial flagellin family. In terms of assembly, in C.crescentus, the flagellar filament is composed of multiple flagellins of 29 kDa; 27 kDa and 25 kDa.

The protein localises to the secreted. The protein resides in the bacterial flagellum. Functionally, flagellin is the subunit protein which polymerizes to form the filaments of bacterial flagella. The chain is Flagellin FljN (fljN) from Caulobacter vibrioides (strain ATCC 19089 / CIP 103742 / CB 15) (Caulobacter crescentus).